Consider the following 198-residue polypeptide: Glycerol-3-phosphate acyltransferase (198 aa).

5 consecutive transmembrane segments (helical) span residues 1–21 (MILITSLAVLVSYLIGSIPAA), 52–72 (GPALLVAAFDILKGAIAVGLA), 81–101 (WTALCGVAAVLGHNFSPFLGF), 115–135 (LALDPVVGGGAFVVGVGCIWL), and 153–173 (LAAALARPGWLLLIVAFLAAL).

It belongs to the PlsY family. As to quaternary structure, probably interacts with PlsX.

It is found in the cell membrane. The enzyme catalyses an acyl phosphate + sn-glycerol 3-phosphate = a 1-acyl-sn-glycero-3-phosphate + phosphate. The protein operates within lipid metabolism; phospholipid metabolism. Its function is as follows. Catalyzes the transfer of an acyl group from acyl-phosphate (acyl-PO(4)) to glycerol-3-phosphate (G3P) to form lysophosphatidic acid (LPA). This enzyme utilizes acyl-phosphate as fatty acyl donor, but not acyl-CoA or acyl-ACP. The sequence is that of Glycerol-3-phosphate acyltransferase from Deinococcus geothermalis (strain DSM 11300 / CIP 105573 / AG-3a).